The sequence spans 71 residues: Small ribosomal subunit protein bS21 (71 aa).

The segment covering 49-59 has biased composition (basic residues); sequence KAAAVKRAAKK. The disordered stretch occupies residues 49-71; the sequence is KAAAVKRAAKKVSRENARRVRMY. The segment covering 60 to 71 has biased composition (basic and acidic residues); the sequence is VSRENARRVRMY.

The protein belongs to the bacterial ribosomal protein bS21 family.

This is Small ribosomal subunit protein bS21 from Colwellia psychrerythraea (strain 34H / ATCC BAA-681) (Vibrio psychroerythus).